Consider the following 319-residue polypeptide: Telomere-binding protein cav (319 aa).

The required for binding to Su(var)205 stretch occupies residues 107-312; the sequence is RRKMVQPYPE…SISFQNSGSE (206 aa). Disordered stretches follow at residues 141 to 163 and 186 to 248; these read WQKQ…DNEV and PSDL…PDYY. Short sequence motifs (su(var)205-binding Pro-containing repeat) lie at residues 220–224 and 273–279; these read PETQM and PETEMNE. Over residues 291–311 the composition is skewed to polar residues; that stretch reads SMSIGPSINSDGSISFQNSGS. The segment at 291–319 is disordered; that stretch reads SMSIGPSINSDGSISFQNSGSEPIDVDVN.

In terms of assembly, interacts (via C-terminus) with Su(var)205 dimer (via hinge and chromoshadow domain) and with moi to form the terminin, telomere-capping, complex. Interacts with HP6, which is also part of the terminin complex.

The protein localises to the nucleus. Its subcellular location is the chromosome. The protein resides in the telomere. Functionally, binds to chromosome ends in a sequence-dependent manner and is required for telomere capping. The sequence is that of Telomere-binding protein cav from Drosophila yakuba (Fruit fly).